The sequence spans 683 residues: Methionine--tRNA ligase (683 aa).

The short motif at Pro-15–His-25 is the 'HIGH' region element. Residues Cys-146, Cys-149, Cys-159, and Cys-162 each coordinate Zn(2+). The 'KMSKS' region motif lies at Lys-332 to Ser-336. An ATP-binding site is contributed by Lys-335. The region spanning Asp-582–Met-683 is the tRNA-binding domain.

The protein belongs to the class-I aminoacyl-tRNA synthetase family. MetG type 1 subfamily. Homodimer. It depends on Zn(2+) as a cofactor.

The protein localises to the cytoplasm. The enzyme catalyses tRNA(Met) + L-methionine + ATP = L-methionyl-tRNA(Met) + AMP + diphosphate. Its function is as follows. Is required not only for elongation of protein synthesis but also for the initiation of all mRNA translation through initiator tRNA(fMet) aminoacylation. The protein is Methionine--tRNA ligase of Vibrio cholerae serotype O1 (strain ATCC 39315 / El Tor Inaba N16961).